The following is a 241-amino-acid chain: MORN repeat-containing protein 3 (241 aa).

Positions 6 to 35 (CPRKVEPPWKGWDRKAQKNGLRHQVFAVNG) are interaction with MDM2. MORN repeat units follow at residues 38-60 (YVGE…KSGA), 62-84 (YEGD…DPET), 91-113 (YSGW…PKEY), 114-136 (YEGE…NGDI), 137-159 (YEGQ…NGNR), 160-182 (YEGI…DHGQ), and 184-205 (FEGY…GRDE). An interaction with SIRT1 region spans residues 76–100 (SLSHPDPETGKLRRVYSGWWKGDKK). The interaction with TP53 stretch occupies residues 206 to 240 (APEPTQFPIPKVEILDPDGVLKEALDKLMKPEEEE).

In terms of assembly, interacts with MEIG1. Interacts with TP53, MDM2 and SIRT1; the interactions mediate post-transcriptional modifications of TP53 by MDM2 and SIRT1. In terms of tissue distribution, expressed in testis (at protein level).

It is found in the cytoplasmic vesicle. The protein resides in the secretory vesicle. The protein localises to the acrosome. In terms of biological role, assembles a suppression complex (suppresome) by tethering SIRT1 and MDM2 to regulate composite modifications of p53/TP53. Confers both deacetylation-mediated functional inactivation, by SIRT1, and ubiquitination-dependent degradation, by MDM2, of p53/TP53, promoting a proliferative and cell survival behaviors. May play a role in the regulation of spermatogenesis. The sequence is that of MORN repeat-containing protein 3 (Morn3) from Mus musculus (Mouse).